A 263-amino-acid polypeptide reads, in one-letter code: Adaptin ear-binding coat-associated protein 2 (263 aa).

Disordered regions lie at residues 166–194 (KKKE…PPGG) and 219–263 (APSS…WVQF). Phosphoserine is present on Ser181. 2 short sequence motifs (WXXF motif) span residues 240 to 243 (WGDF) and 260 to 263 (WVQF). Residues 246-263 (STGSTSSQTQPGTGWVQF) show a composition bias toward low complexity.

Belongs to the NECAP family. As to quaternary structure, interacts with AP1G1 and AP2A1 components of the adapter protein complexes AP-1 and AP-2. Interacts with the GAE domain proteins GGA1, GGA2 and GGA3.

The protein resides in the cytoplasmic vesicle. The protein localises to the clathrin-coated vesicle membrane. Its subcellular location is the cell membrane. Its function is as follows. Involved in endocytosis. The polypeptide is Adaptin ear-binding coat-associated protein 2 (NECAP2) (Homo sapiens (Human)).